The sequence spans 1679 residues: Maestro heat-like repeat-containing protein family member 2A (1679 aa).

HEAT repeat units follow at residues 68–91 (ATTD…ISTQ), 92–128 (RKMN…QMRD), 190–229 (MPYM…TVQF), 293–313 (EQVY…GHWP), 314–350 (LFPS…ELHV), 380–417 (SYPK…ADDP), 422–459 (KTIY…SGFQ), 571–610 (PAPQ…SIAP), 614–654 (DMWE…SLKK), 737–774 (KTVL…ETVK), 848–887 (SALT…MKPF), 991–1028 (GQFG…LHVS), 1219–1261 (DPLM…SHGP), 1387–1425 (KLLR…GAPR), and 1632–1669 (MDLV…CNQH).

The sequence is that of Maestro heat-like repeat-containing protein family member 2A (Mroh2a) from Mus musculus (Mouse).